A 304-amino-acid chain; its full sequence is Taste receptor type 2 member 4 (304 aa).

Topologically, residues 1 to 10 (MLWELYAFVF) are extracellular. A helical transmembrane segment spans residues 11-31 (AASVVFNFVGIVANLFIIVII). The Cytoplasmic segment spans residues 32–46 (SKTWVKSHKISSSDK). The helical transmembrane segment at 47-67 (ILFSLAITRFLTLGLFLLNTV) threads the bilayer. Residues 68 to 80 (YIATNTGRSVYFS) are Extracellular-facing. Residues 81-101 (TFFLLCWKFLDSNSLWLVTFL) form a helical membrane-spanning segment. The Cytoplasmic segment spans residues 102–128 (NCLYCVKITHFQHPVFLLLKRTVSMKT). Residues 129-149 (TSLLLACLLISAFTTLLYFVL) traverse the membrane as a helical segment. Over 150–171 (TQISRFPEHIIGRNDTLFDVSD) the chain is Extracellular. Residue Asn163 is glycosylated (N-linked (GlcNAc...) asparagine). The chain crosses the membrane as a helical span at residues 172–192 (GILTLAASLILSSLLQFLLNV). Topologically, residues 193–229 (TFASLLIHSLRRHVQKMQRNRSSFWNPQTEAHVGAMR) are cytoplasmic. A helical membrane pass occupies residues 230–250 (LMICFLVLYIPYSIAALLYFP). Residues 251-260 (SYMRKNLRAQ) are Extracellular-facing. Residues 261-281 (AACMIITAAYPPGHSILLIIT) traverse the membrane as a helical segment. At 282-304 (HHKLKAKAKKICCFYKLRDFVSN) the chain is on the cytoplasmic side.

It belongs to the G-protein coupled receptor T2R family. As to expression, expressed in tongue, stomach and duodenum.

The protein localises to the membrane. Its subcellular location is the cell projection. The protein resides in the cilium membrane. Functionally, gustducin-coupled receptor implicated in the perception of bitter compounds in the oral cavity and the gastrointestinal tract. Signals through PLCB2 and the calcium-regulated cation channel TRPM5. In airway epithelial cells, binding of denatonium increases the intracellular calcium ion concentration and stimulates ciliary beat frequency. The sequence is that of Taste receptor type 2 member 4 from Rattus norvegicus (Rat).